The primary structure comprises 605 residues: Tegument protein UL47 homolog (605 aa).

Positions 1–75 are disordered; the sequence is MATDNARPRS…DPWKLEPAND (75 aa). Basic residues predominate over residues 8 to 17; the sequence is PRSRSLRRKS. The span at 54 to 69 shows a compositional bias: basic and acidic residues; sequence GADRDPGTRRGIDPWK.

This sequence belongs to the alphaherpesvirinae HHV-1 UL47 family. In terms of assembly, interacts with US3 kinase. Interacts with UL31 and UL34; these interactions seem important for efficient virion nuclear egress. Interacts with UL41/VHS. Phosphorylated by US3. This phosphorylation is required for proper nuclear localization.

Its subcellular location is the virion tegument. It localises to the host nucleus. The protein localises to the host cytoplasm. Tegument protein that can bind to various RNA transcripts. Plays a role in the attenuation of selective viral and cellular mRNA degradation by modulating the activity of host shutoff RNase UL41/VHS. Also plays a role in the primary envelopment of virions in the perinuclear space, probably by interacting with two nuclear egress proteins UL31 and UL34. This Amazona oratrix (yellow-headed parrot) protein is Tegument protein UL47 homolog (sORF1).